The following is a 150-amino-acid chain: MTTEQTTMNITEIQELLPHRYPFLMVDRVTSFEKEKTLTAIKNVSVNEPQFTGHFPQLPVFPGVLILEAMAQATGLLAFKSFGAPSGNELYYFASVDKAKFRKPVVPGDQLVIEVEFLKERRGIASFNGVAKVDGVVVCSAELKCARREF.

His-54 is an active-site residue.

This sequence belongs to the thioester dehydratase family. FabZ subfamily.

Its subcellular location is the cytoplasm. The enzyme catalyses a (3R)-hydroxyacyl-[ACP] = a (2E)-enoyl-[ACP] + H2O. Functionally, involved in unsaturated fatty acids biosynthesis. Catalyzes the dehydration of short chain beta-hydroxyacyl-ACPs and long chain saturated and unsaturated beta-hydroxyacyl-ACPs. The protein is 3-hydroxyacyl-[acyl-carrier-protein] dehydratase FabZ of Vibrio atlanticus (strain LGP32) (Vibrio splendidus (strain Mel32)).